The sequence spans 297 residues: MDIPVEFLTAQEPLSYGHIPPVYWKELLNWIDRILTHNQATPNTWEATHMVLLKLHGTLSFSNPAQLPLVAAACLQIAAKHTEAHSRLADPDYITMLGDGVYTKPSLLLTETMALFIVGGHVGAYTLAACDWLLGSLPFSQAENDLLHPYMYHYIKLSYRHRTPDYHSSPALRAAVVIAAAVKGADLLEMNMLFIMMYHLTHISTASLSLGLTHFTAALQRQINLDFAEAEQREAAERRALLEREREQQLQEARERLDDVMAVLEAEVAITITTATEGTDAEDTSEVDVINVVDPIG.

A Cyclin N-terminal domain is found at 21 to 113 (PVYWKELLNW…KPSLLLTETM (93 aa)). The segment at 21-113 (PVYWKELLNW…KPSLLLTETM (93 aa)) is transcription activation domain. The stretch at 222–270 (QINLDFAEAEQREAAERRALLEREREQQLQEARERLDDVMAVLEAEVAI) forms a coiled coil.

The protein belongs to the cyclin family. As to quaternary structure, interacts (via transcription activation domain) with host TAF9 in vitro. Interacts with host CDK3 and CDK8.

It is found in the host nucleus. Transforming protein which induces the development of dermal sarcomas. Induces positive and negative regulation of transcription from host and viral promoters by interacting with various cellular factors involved in protein transcription regulation. This is Retroviral cyclin (orfA) from Sander vitreus (Walleye).